We begin with the raw amino-acid sequence, 385 residues long: 8-amino-7-oxononanoate synthase (385 aa).

Position 21 (arginine 21) interacts with substrate. 108–109 (GF) contacts pyridoxal 5'-phosphate. Histidine 133 contacts substrate. Serine 179, histidine 207, and threonine 233 together coordinate pyridoxal 5'-phosphate. Lysine 236 is modified (N6-(pyridoxal phosphate)lysine). Threonine 352 contacts substrate.

The protein belongs to the class-II pyridoxal-phosphate-dependent aminotransferase family. BioF subfamily. In terms of assembly, homodimer. The cofactor is pyridoxal 5'-phosphate.

The catalysed reaction is 6-carboxyhexanoyl-[ACP] + L-alanine + H(+) = (8S)-8-amino-7-oxononanoate + holo-[ACP] + CO2. Its pathway is cofactor biosynthesis; biotin biosynthesis. Functionally, catalyzes the decarboxylative condensation of pimeloyl-[acyl-carrier protein] and L-alanine to produce 8-amino-7-oxononanoate (AON), [acyl-carrier protein], and carbon dioxide. The protein is 8-amino-7-oxononanoate synthase of Salmonella arizonae (strain ATCC BAA-731 / CDC346-86 / RSK2980).